We begin with the raw amino-acid sequence, 511 residues long: Exodeoxyribonuclease 7 large subunit (511 aa).

It belongs to the XseA family. In terms of assembly, heterooligomer composed of large and small subunits.

Its subcellular location is the cytoplasm. It carries out the reaction Exonucleolytic cleavage in either 5'- to 3'- or 3'- to 5'-direction to yield nucleoside 5'-phosphates.. Bidirectionally degrades single-stranded DNA into large acid-insoluble oligonucleotides, which are then degraded further into small acid-soluble oligonucleotides. This Brucella abortus (strain S19) protein is Exodeoxyribonuclease 7 large subunit.